A 91-amino-acid polypeptide reads, in one-letter code: UPF0250 protein PSPTO_4820 (91 aa).

Belongs to the UPF0250 family.

The polypeptide is UPF0250 protein PSPTO_4820 (Pseudomonas syringae pv. tomato (strain ATCC BAA-871 / DC3000)).